The primary structure comprises 185 residues: Putative sulfur carrier protein YrkF (185 aa).

Catalysis depends on C15, which acts as the Cysteine persulfide intermediate. In terms of domain architecture, Rhodanese spans 101–185; the sequence is SDESLNILDV…GMRDWTGKTE (85 aa).

It belongs to the sulfur carrier protein TusA family.

The polypeptide is Putative sulfur carrier protein YrkF (yrkF) (Bacillus subtilis (strain 168)).